A 102-amino-acid polypeptide reads, in one-letter code: Protein RnfH (102 aa).

It belongs to the UPF0125 (RnfH) family.

The protein is Protein RnfH of Haemophilus influenzae (strain PittEE).